Reading from the N-terminus, the 400-residue chain is Phosphoribosylamine--glycine ligase (400 aa).

The ATP-grasp domain maps to 99–303; sequence KRFMKKYGIR…FVNAVLEGYR (205 aa). 125–186 lines the ATP pocket; the sequence is IKKFSPPYVI…DEFLAGNELS (62 aa). The Mg(2+) site is built by E273 and N275.

Belongs to the GARS family. Mg(2+) is required as a cofactor. Mn(2+) serves as cofactor.

The catalysed reaction is 5-phospho-beta-D-ribosylamine + glycine + ATP = N(1)-(5-phospho-beta-D-ribosyl)glycinamide + ADP + phosphate + H(+). It functions in the pathway purine metabolism; IMP biosynthesis via de novo pathway; N(1)-(5-phospho-D-ribosyl)glycinamide from 5-phospho-alpha-D-ribose 1-diphosphate: step 2/2. This is Phosphoribosylamine--glycine ligase from Thermotoga maritima (strain ATCC 43589 / DSM 3109 / JCM 10099 / NBRC 100826 / MSB8).